A 221-amino-acid polypeptide reads, in one-letter code: Iron-sulfur cluster assembly SufBD family protein ycf24 (221 aa).

Belongs to the iron-sulfur cluster assembly SufBD family.

The protein resides in the plastid. It is found in the chloroplast. The polypeptide is Iron-sulfur cluster assembly SufBD family protein ycf24 (ycf24) (Galdieria sulphuraria (Red alga)).